The following is a 784-amino-acid chain: Transcriptional activator somA (784 aa).

Residues 43–75 (MINNLNTYIYDYFLKRGYHECARALVKDESIKL) form the LisH domain. The segment covering 75–84 (LNTEPPTKTS) has biased composition (polar residues). Disordered stretches follow at residues 75-122 (LNTE…PNLA), 212-295 (GLSQ…SQAL), 424-726 (MMAR…DLSI), and 764-784 (GFDP…GDGL). Over residues 103–117 (DSKDGDKIKIPDDLP) the composition is skewed to basic and acidic residues. Residues 215–233 (QQQIAQLQKNQQMHMMQQM) show a composition bias toward low complexity. The span at 234–244 (QREHSDMDMNG) shows a compositional bias: basic and acidic residues. The span at 247 to 259 (PQSPSSAENAPSP) shows a compositional bias: low complexity. Positions 453-467 (SPQGSRAGTSPNPNE) are enriched in polar residues. The segment covering 564–592 (QQQQGQPMGPQQSPAQQPQSTGTPQTQNS) has biased composition (low complexity). Residues 607-624 (RTSPQSQNAAPPTPQQAN) show a composition bias toward polar residues. Over residues 629-638 (KKREPKDTAR) the composition is skewed to basic and acidic residues. Low complexity-rich tracts occupy residues 644–661 (KQPA…TPSS) and 691–701 (PTTSAPQQPTS). Pro residues predominate over residues 702–715 (APAPQPIVQQPPPD).

Belongs to the FLO8 family. Interacts with ptaB.

It localises to the nucleus. Its function is as follows. Transcription factor that controls the expression of genes related to the process of conidiation and adherence and regulates biofilm formation. Controls conidiation and adhesion primarily by affecting the expression of the three regulatory genes flbB, stuA and medA. Required for virulence in an egg and a mouse infection model. The chain is Transcriptional activator somA from Aspergillus fumigatus (strain ATCC MYA-4609 / CBS 101355 / FGSC A1100 / Af293) (Neosartorya fumigata).